Here is a 349-residue protein sequence, read N- to C-terminus: Hydroxymethylglutaryl-CoA synthase (349 aa).

(3S)-3-hydroxy-3-methylglutaryl-CoA contacts are provided by Asp-29 and Ala-30. Glu-81 (proton donor/acceptor) is an active-site residue. Positions 113 and 154 each coordinate (3S)-3-hydroxy-3-methylglutaryl-CoA. Cys-113 serves as the catalytic Acyl-thioester intermediate. Arg-202 contributes to the CoA binding site. Positions 204 and 237 each coordinate (3S)-3-hydroxy-3-methylglutaryl-CoA. His-237 (proton donor/acceptor) is an active-site residue. Residue Lys-242 coordinates CoA. Residues Lys-246, Asn-269, and Ser-299 each coordinate (3S)-3-hydroxy-3-methylglutaryl-CoA.

It belongs to the thiolase-like superfamily. Archaeal HMG-CoA synthase family. In terms of assembly, interacts with acetoacetyl-CoA thiolase that catalyzes the precedent step in the pathway and with a DUF35 protein. The acetoacetyl-CoA thiolase/HMG-CoA synthase complex channels the intermediate via a fused CoA-binding site, which allows for efficient coupling of the endergonic thiolase reaction with the exergonic HMGCS reaction.

The enzyme catalyses acetoacetyl-CoA + acetyl-CoA + H2O = (3S)-3-hydroxy-3-methylglutaryl-CoA + CoA + H(+). It participates in metabolic intermediate biosynthesis; (R)-mevalonate biosynthesis; (R)-mevalonate from acetyl-CoA: step 2/3. Catalyzes the condensation of acetyl-CoA with acetoacetyl-CoA to form 3-hydroxy-3-methylglutaryl-CoA (HMG-CoA). Functions in the mevalonate (MVA) pathway leading to isopentenyl diphosphate (IPP), a key precursor for the biosynthesis of isoprenoid compounds that are building blocks of archaeal membrane lipids. The chain is Hydroxymethylglutaryl-CoA synthase from Methanosarcina acetivorans (strain ATCC 35395 / DSM 2834 / JCM 12185 / C2A).